A 321-amino-acid chain; its full sequence is Phosphopantothenate--cysteine ligase 1 (321 aa).

It belongs to the PPC synthetase family. In terms of assembly, homodimer.

The catalysed reaction is (R)-4'-phosphopantothenate + L-cysteine + CTP = N-[(R)-4-phosphopantothenoyl]-L-cysteine + CMP + diphosphate + H(+). The protein operates within cofactor biosynthesis; coenzyme A biosynthesis; CoA from (R)-pantothenate: step 2/5. Catalyzes the first step in the biosynthesis of coenzyme A from vitamin B5, where cysteine is conjugated to 4'-phosphopantothenate to form 4-phosphopantothenoylcysteine. The protein is Phosphopantothenate--cysteine ligase 1 of Oryza sativa subsp. japonica (Rice).